Consider the following 385-residue polypeptide: MKWSVRGACAALSSCLLLACALSAAAVGLKCFSLGSELRGEPFRLGAAAGAFYSGLLLAAGLSLLGAALLCCGPRDAPLAGSEPGPGLGVPAAPAGAPEATPGESGAAAGAPGPVSSQNLLLLGVLVFMLGVLSAFAGAVIDGDTVSLVERKYSHYCLPPRAPGSSPGSAPGSTPGSAPGSAPGSAPGSAPGAPRARSTLDSATSAKCRQLKDYQRGLVLSTVFNSLECLLGLLSLLLVKNYKSSQARRGRRGRRRGGRALARPRGGSGLRAQPPASRARRGRRGRRGRRLQQRPSEASILSPEESDLAAPGDCAGFAAHHAVSYINVGVLHALDEAGAEVRCGGHPSVELPGYAPSDPDLNASYPYCCRPPCETPRPWETHRAC.

2 consecutive transmembrane segments (helical) span residues 9–29 and 50–70; these read CAALSSCLLLACALSAAAVGL and GAFYSGLLLAAGLSLLGAALL. The tract at residues 83–111 is disordered; sequence EPGPGLGVPAAPAGAPEATPGESGAAAGA. Residues 121 to 141 form a helical membrane-spanning segment; that stretch reads LLLGVLVFMLGVLSAFAGAVI. Positions 160–203 are disordered; sequence PRAPGSSPGSAPGSTPGSAPGSAPGSAPGSAPGAPRARSTLDSA. Positions 163 to 197 are enriched in low complexity; sequence PGSSPGSAPGSTPGSAPGSAPGSAPGSAPGAPRAR. Residues 219-239 form a helical membrane-spanning segment; it reads VLSTVFNSLECLLGLLSLLLV. Residues 245–305 are disordered; the sequence is SQARRGRRGR…SEASILSPEE (61 aa). The span at 246 to 258 shows a compositional bias: basic residues; it reads QARRGRRGRRRGG. The span at 259-277 shows a compositional bias: low complexity; that stretch reads RALARPRGGSGLRAQPPAS. Residues 278 to 292 are compositionally biased toward basic residues; it reads RARRGRRGRRGRRLQ.

It localises to the membrane. This chain is Transmembrane protein 271, found in Homo sapiens (Human).